Reading from the N-terminus, the 393-residue chain is MAVLKMTDLDLKGKRVLLREDLNVPLKDGKVTSDKRIRAALPSIEMALKAGARVLLVSHLGRPTEGEFDPAFSLAPVAEHLSRALGFQVPLVRDYIDGIEVAEGQCVLCENVRFLKGEKKDDEALGRKLAALCDIFVMDAFGAAHRAQASTHAAVRFAKVACAGPLLAAELDALSRALDAPAKPMVGIIGGSKVSTKLTLLDTLSKKVDRLIVGGGIANNFIKAAGHEVGRSLYEPELVDEAARLMAAARAAGGEIPVPVDVVVGPEFADSAPATVRKVSEVKPDEMILDIGPETAKLYRDILMQAGTIVWNGPVGAFEVEQFGQGTKALCMAVADSPAFSLAGGGDTVAAIEKYGVVDRISYMSTGGGAFLEFLEGKTLPAVAVLEERSSKG.

Residues 21–23, Arg36, 59–62, Arg113, and Arg146 each bind substrate; these read DLN and HLGR. Residues Lys197, Glu319, and 345–348 contribute to the ATP site; that span reads GGDT.

This sequence belongs to the phosphoglycerate kinase family. As to quaternary structure, monomer.

It localises to the cytoplasm. It catalyses the reaction (2R)-3-phosphoglycerate + ATP = (2R)-3-phospho-glyceroyl phosphate + ADP. The protein operates within carbohydrate degradation; glycolysis; pyruvate from D-glyceraldehyde 3-phosphate: step 2/5. This is Phosphoglycerate kinase from Nitratidesulfovibrio vulgaris (strain DSM 19637 / Miyazaki F) (Desulfovibrio vulgaris).